Consider the following 340-residue polypeptide: uncharacterized protein (340 aa).

The next 2 membrane-spanning stretches (helical) occupy residues Pro-162 to Gly-182 and Phe-239 to Pro-259.

Its subcellular location is the cell membrane. This is an uncharacterized protein from Mycobacterium bovis (strain ATCC BAA-935 / AF2122/97).